We begin with the raw amino-acid sequence, 290 residues long: Enoyl-CoA hydratase, mitochondrial (290 aa).

The N-terminal 27 residues, 1–27 (MATLRVLLSCVRGPLRPPVRCPAWRPF), are a transit peptide targeting the mitochondrion. Phosphothreonine is present on Thr46. Position 98 to 101 (98 to 101 (ADIK)) interacts with substrate. Residue Lys101 is modified to N6-acetyllysine; alternate. Lys101 carries the post-translational modification N6-succinyllysine; alternate. Ser114 is subject to Phosphoserine. Lys115 is modified (N6-acetyllysine; alternate). The residue at position 115 (Lys115) is an N6-succinyllysine; alternate. At Lys118 the chain carries N6-acetyllysine. Gly141 provides a ligand contact to substrate. An N6-succinyllysine modification is found at Lys204. Lys211 carries the N6-acetyllysine modification.

Belongs to the enoyl-CoA hydratase/isomerase family. Homohexamer; dimer of trimers.

Its subcellular location is the mitochondrion matrix. It catalyses the reaction a (3S)-3-hydroxyacyl-CoA = a (2E)-enoyl-CoA + H2O. The catalysed reaction is a (3E)-enoyl-CoA = a 4-saturated (2E)-enoyl-CoA. It carries out the reaction (3E)-hexenoyl-CoA = (2E)-hexenoyl-CoA. The enzyme catalyses (3S)-3-hydroxybutanoyl-CoA = (2E)-butenoyl-CoA + H2O. It catalyses the reaction 3-hydroxyisovaleryl-CoA = 3-methylbut-2-enoyl-CoA + H2O. The catalysed reaction is 3-hydroxypropanoyl-CoA = acryloyl-CoA + H2O. It carries out the reaction 3-hydroxybutanoyl-CoA = (2E)-butenoyl-CoA + H2O. The enzyme catalyses 2-methylpropenoyl-CoA + H2O = (S)-3-hydroxyisobutanoyl-CoA. It catalyses the reaction (3S)-hydroxyhexanoyl-CoA = (2E)-hexenoyl-CoA + H2O. The catalysed reaction is (3S)-hydroxydecanoyl-CoA = (2E)-decenoyl-CoA + H2O. Its pathway is lipid metabolism; fatty acid beta-oxidation. Converts unsaturated trans-2-enoyl-CoA species ((2E)-enoyl-CoA) to the corresponding (3S)-3-hydroxyacyl-CoA species through addition of a water molecule to the double bond. Catalyzes the hydration of medium- and short-chained fatty enoyl-CoA thioesters from 4 carbons long (C4) up to C16. Has high substrate specificity for crotonyl-CoA ((2E)-butenoyl-CoA) and moderate specificity for acryloyl-CoA, 3-methylcrotonyl-CoA (3-methyl-(2E)-butenoyl-CoA) and methacrylyl-CoA ((2E)-2-methylpropenoyl-CoA). Can bind tiglyl-CoA (2-methylcrotonoyl-CoA), but hydrates only a small amount of this substrate. Plays a key role in the beta-oxidation spiral of short- and medium-chain fatty acid oxidation. At a lower rate than the hydratase reaction, catalyzes the isomerase reaction of trans-3-enoyl-CoA species (such as (3E)-hexenoyl-CoA) to trans-2-enoyl-CoA species (such as (2E)-hexenoyl-CoA), which are subsequently hydrated to 3(S)-3-hydroxyacyl-CoA species (such as (3S)-hydroxyhexanoyl-CoA). This Pongo abelii (Sumatran orangutan) protein is Enoyl-CoA hydratase, mitochondrial (ECHS1).